A 253-amino-acid polypeptide reads, in one-letter code: Triosephosphate isomerase (253 aa).

13–15 (NWK) serves as a coordination point for substrate. The Electrophile role is filled by histidine 100. The active-site Proton acceptor is glutamate 169. Substrate contacts are provided by residues glycine 175, serine 208, and 229–230 (GG).

The protein belongs to the triosephosphate isomerase family. Homodimer.

Its subcellular location is the cytoplasm. The catalysed reaction is D-glyceraldehyde 3-phosphate = dihydroxyacetone phosphate. It participates in carbohydrate biosynthesis; gluconeogenesis. It functions in the pathway carbohydrate degradation; glycolysis; D-glyceraldehyde 3-phosphate from glycerone phosphate: step 1/1. Its function is as follows. Involved in the gluconeogenesis. Catalyzes stereospecifically the conversion of dihydroxyacetone phosphate (DHAP) to D-glyceraldehyde-3-phosphate (G3P). In Synechococcus sp. (strain RCC307), this protein is Triosephosphate isomerase.